Consider the following 429-residue polypeptide: Ribosomal RNA small subunit methyltransferase B (429 aa).

S-adenosyl-L-methionine is bound by residues 254–260 (CSAPGGK), Asp277, Asp303, and Asp322. Residue Cys375 is the Nucleophile of the active site. A disordered region spans residues 397-419 (ALSETGTPDQPGQQNLPGGEEGD). Polar residues predominate over residues 400-412 (ETGTPDQPGQQNL).

The protein belongs to the class I-like SAM-binding methyltransferase superfamily. RsmB/NOP family.

It is found in the cytoplasm. The catalysed reaction is cytidine(967) in 16S rRNA + S-adenosyl-L-methionine = 5-methylcytidine(967) in 16S rRNA + S-adenosyl-L-homocysteine + H(+). Specifically methylates the cytosine at position 967 (m5C967) of 16S rRNA. The sequence is that of Ribosomal RNA small subunit methyltransferase B from Salmonella dublin (strain CT_02021853).